We begin with the raw amino-acid sequence, 763 residues long: Phosphoglycerol transferase I (763 aa).

A run of 4 helical transmembrane segments spans residues 1–21, 26–46, 77–97, and 108–128; these read MSEL…AWKA, WWFA…ITLF, ILPG…LGWI, and FGYS…SPAF.

The protein belongs to the OpgB family.

Its subcellular location is the cell inner membrane. It carries out the reaction a phosphatidylglycerol + a membrane-derived-oligosaccharide D-glucose = a 1,2-diacyl-sn-glycerol + a membrane-derived-oligosaccharide 6-(glycerophospho)-D-glucose.. It participates in glycan metabolism; osmoregulated periplasmic glucan (OPG) biosynthesis. Transfers a phosphoglycerol residue from phosphatidylglycerol to the membrane-bound nascent glucan backbones. In Escherichia coli O6:K15:H31 (strain 536 / UPEC), this protein is Phosphoglycerol transferase I.